The sequence spans 100 residues: MELTPREKDKLLIFTAALLAERRKARGLKLNYPEAVALISAAVMEGARDGKSVAALMSEGRTVLTRADVMDGIAEMIPDIQVEATFPDGTKLVTVHQPIV.

This sequence belongs to the urease gamma subunit family. As to quaternary structure, heterotrimer of UreA (gamma), UreB (beta) and UreC (alpha) subunits. Three heterotrimers associate to form the active enzyme.

It localises to the cytoplasm. It carries out the reaction urea + 2 H2O + H(+) = hydrogencarbonate + 2 NH4(+). Its pathway is nitrogen metabolism; urea degradation; CO(2) and NH(3) from urea (urease route): step 1/1. The protein is Urease subunit gamma of Variovorax paradoxus (strain S110).